We begin with the raw amino-acid sequence, 724 residues long: MSFPKAPLKRFNDPSGCAPSPGAYDVKTLEVLKGPVSFQKSQRFKQQKESKQNLNVDKDTTLPASARKVKSSESKESQKNDKDLKILEKEIRVLLQERGAQDRRIQDLETELEKMEARLNAALREKTSLSANNATLEKQLIELTRTNELLKSKFSENGNQKNLRILSLELMKLRNKRETKMRGMMAKQEGMEMKLQVTQRSLEESQGKIAQLEGKLVSIEKEKIDEKSETEKLLEYIEEISCASDQVEKYKLDIAQLEENLKEKNDEILSLKQSLEENIVILSKQVEDLNVKCQLLEKEKEDHVNRNREHNENLNAEMQNLKQKFILEQQEREKLQQKELQIDSLLQQEKELSSSLHQKLCSFQEEMVKEKNLFEEELKQTLDELDKLQQKEEQAERLVKQLEEEAKSRAEELKLLEEKLKGKEAELEKSSAAHTQATLLLQEKYDSMVQSLEDVTAQFESYKALTASEIEDLKLENSSLQEKAAKAGKNAEDVQHQILATESSNQEYVRMLLDLQTKSALKETEIKEITVSFLQKITDLQNQLKQQEEDFRKQLEDEEGRKAEKENTTAELTEEINKWRLLYEELYNKTKPFQLQLDAFEVEKQALLNEHGAAQEQLNKIRDSYAKLLGHQNLKQKIKHVVKLKDENSQLKSEVSKLRCQLAKKKQSETKLQEELNKVLGIKHFDPSKAFHHESKENFALKTPLKEGNTNCYRAPMECQESWK.

Disordered regions lie at residues 1–22 and 40–81; these read MSFPKAPLKRFNDPSGCAPSPG and KSQR…QKND. S20 carries the phosphoserine modification. Composition is skewed to basic and acidic residues over residues 46 to 60 and 70 to 81; these read QQKESKQNLNVDKDT and KSSESKESQKND. Residues N133, N477, N567, and N588 are each glycosylated (N-linked (GlcNAc...) asparagine). The required for interaction with FAM83D stretch occupies residues 365-546; it reads EEMVKEKNLF…ITDLQNQLKQ (182 aa). 2 hyaluronic acid-binding regions span residues 635-645 and 657-666; these read KQKIKHVVKLK and KLRCQLAKKK. Residue T703 is modified to Phosphothreonine.

Interacts with ANKRD26. Interacts with DYNLL1. Interacts with FAM83D/CHICA. In terms of tissue distribution, expressed in testis. Expressed in the breast.

The protein localises to the cell surface. Its subcellular location is the cytoplasm. The protein resides in the cytoskeleton. It is found in the spindle. Receptor for hyaluronic acid (HA). Involved in cell motility. When hyaluronan binds to HMMR, the phosphorylation of a number of proteins, including PTK2/FAK1 occurs. May also be involved in cellular transformation and metastasis formation, and in regulating extracellular-regulated kinase (ERK) activity. May act as a regulator of adipogenisis. This Homo sapiens (Human) protein is Hyaluronan mediated motility receptor (HMMR).